The following is a 709-amino-acid chain: Catalase HPII (709 aa).

Residues 1-26 are compositionally biased toward polar residues; it reads MSEQNNEQRSQAAGTDTVDRGNSNAK. The interval 1 to 32 is disordered; it reads MSEQNNEQRSQAAGTDTVDRGNSNAKLEQLEA. Residues H90 and N163 contribute to the active site. Position 377 (Y377) interacts with heme. A disordered region spans residues 419-443; that stretch reads RASYEPNSIDGGWPKETPPAARNGG.

This sequence belongs to the catalase family. HPII subfamily. It depends on heme as a cofactor.

Its subcellular location is the cytoplasm. The catalysed reaction is 2 H2O2 = O2 + 2 H2O. Functionally, decomposes hydrogen peroxide into water and oxygen; serves to protect cells from the toxic effects of hydrogen peroxide. The chain is Catalase HPII (katE) from Pseudomonas aeruginosa (strain ATCC 15692 / DSM 22644 / CIP 104116 / JCM 14847 / LMG 12228 / 1C / PRS 101 / PAO1).